A 379-amino-acid chain; its full sequence is Peritrophin-48 (379 aa).

The first 20 residues, 1–20 (MKAKTLTATLALILLAFAQA), serve as a signal peptide directing secretion. Chitin-binding type-2 domains lie at 25 to 83 (ASYC…NCFF) and 86 to 143 (ANPC…NTGN). 2 disulfide bridges follow: Cys-60–Cys-73 and Cys-120–Cys-133. 2 N-linked (GlcNAc...) asparagine glycosylation sites follow: Asn-150 and Asn-168. 3 consecutive Chitin-binding type-2 domains span residues 151–208 (LSVC…ACSR), 224–283 (TSPC…RTLK), and 285–356 (CNRC…ACEN). An intrachain disulfide couples Cys-185 to Cys-198. N-linked (GlcNAc...) asparagine glycans are attached at residues Asn-247 and Asn-252. A disulfide bridge links Cys-324 with Cys-337. N-linked (GlcNAc...) asparagine glycans are attached at residues Asn-341, Asn-356, and Asn-373.

In terms of processing, glycosylated. Larval peritrophic membrane.

Its function is as follows. Binds chitin and may bind related oligosaccharide structures. The protein is Peritrophin-48 of Chrysomya bezziana (Old world screw-worm fly).